A 146-amino-acid chain; its full sequence is Small ribosomal subunit protein uS5 (146 aa).

The 64-residue stretch at 8–71 folds into the S5 DRBM domain; it reads FQEAIVKIGR…DDAFKSLVTV (64 aa).

This sequence belongs to the universal ribosomal protein uS5 family. As to quaternary structure, part of the 30S ribosomal subunit. Contacts proteins S4 and S8.

Its function is as follows. With S4 and S12 plays an important role in translational accuracy. Located at the back of the 30S subunit body where it stabilizes the conformation of the head with respect to the body. In Aliarcobacter butzleri (strain RM4018) (Arcobacter butzleri), this protein is Small ribosomal subunit protein uS5.